Here is a 162-residue protein sequence, read N- to C-terminus: Allophycocyanin subunit beta (162 aa).

N4-methylasparagine is present on Asn-72. Residue Cys-82 coordinates (2R,3E)-phycocyanobilin.

This sequence belongs to the phycobiliprotein family. As to quaternary structure, heterohexamer of two alpha chains, one alpha-B chain and three beta chains. Contains one covalently linked phycocyanobilin chromophore. The chromophore is added by phycocyanobilin lyase CpcS 1.

The protein localises to the cellular thylakoid membrane. Light-harvesting photosynthetic bile pigment-protein from the phycobiliprotein complex. Allophycocyanin has a maximum absorption at approximately 650 to 653 nanometers. This Nostoc sp. (strain PCC 7120 / SAG 25.82 / UTEX 2576) protein is Allophycocyanin subunit beta (apcB).